The following is a 560-amino-acid chain: Long-chain-fatty-acid--CoA ligase (560 aa).

Belongs to the ATP-dependent AMP-binding enzyme family.

It carries out the reaction a long-chain fatty acid + ATP + CoA = a long-chain fatty acyl-CoA + AMP + diphosphate. The protein is Long-chain-fatty-acid--CoA ligase (lcfA) of Bacillus subtilis (strain 168).